A 357-amino-acid chain; its full sequence is Alanine racemase (357 aa).

Residue Lys35 is the Proton acceptor; specific for D-alanine of the active site. The residue at position 35 (Lys35) is an N6-(pyridoxal phosphate)lysine. Substrate is bound at residue Arg131. Catalysis depends on Tyr256, which acts as the Proton acceptor; specific for L-alanine. Met304 lines the substrate pocket.

The protein belongs to the alanine racemase family. Requires pyridoxal 5'-phosphate as cofactor.

It carries out the reaction L-alanine = D-alanine. It participates in amino-acid biosynthesis; D-alanine biosynthesis; D-alanine from L-alanine: step 1/1. Its function is as follows. Catalyzes the interconversion of L-alanine and D-alanine. May also act on other amino acids. This is Alanine racemase (alr) from Legionella pneumophila (strain Corby).